The chain runs to 170 residues: Ribosomal RNA small subunit methyltransferase G (170 aa).

S-adenosyl-L-methionine contacts are provided by residues Gly-70, Leu-75, 120–121, and Arg-138; that span reads AE.

Belongs to the methyltransferase superfamily. RNA methyltransferase RsmG family.

Its subcellular location is the cytoplasm. Specifically methylates the N7 position of guanine in position 518 of 16S rRNA. The chain is Ribosomal RNA small subunit methyltransferase G from Mycobacterium ulcerans (strain Agy99).